We begin with the raw amino-acid sequence, 154 residues long: Transcriptional repressor NrdR (154 aa).

A zinc finger lies at 3-34 (CPFCRHPDSRVVDSRETDEGQAIRRRRSCPEC). Residues 46–136 (LAVVKRSGVT…VYRSFSSAED (91 aa)) enclose the ATP-cone domain.

Belongs to the NrdR family. The cofactor is Zn(2+).

Its function is as follows. Negatively regulates transcription of bacterial ribonucleotide reductase nrd genes and operons by binding to NrdR-boxes. This Mycolicibacterium gilvum (strain PYR-GCK) (Mycobacterium gilvum (strain PYR-GCK)) protein is Transcriptional repressor NrdR.